An 81-amino-acid polypeptide reads, in one-letter code: Cytotoxin 1 (81 aa).

The signal sequence occupies residues 1 to 21 (MKTLLLTLVVVTIVCLDLGYT). Intrachain disulfides connect C24–C42, C35–C59, C63–C74, and C75–C80.

Belongs to the three-finger toxin family. Short-chain subfamily. Type IA cytotoxin sub-subfamily. In terms of assembly, monomer in solution; Homodimer and oligomer in the presence of negatively charged lipids forming a pore with a size ranging between 20 and 30 Angstroms. Expressed by the venom gland.

It is found in the secreted. The protein resides in the target cell membrane. Its function is as follows. Basic protein that binds to cell membrane and depolarizes cardiomyocytes. It also shows lytic activities on many other cells, including red blood cells. Interaction with sulfatides in the cell membrane induces pore formation and cell internalization and is responsible for cytotoxicity in cardiomyocytes. It targets the mitochondrial membrane and induces mitochondrial swelling and fragmentation. It binds to the integrin alpha-V/beta-3 (ITGAV/ITGB3) with a moderate affinity and inhibits protein kinases C. It also binds with high affinity to heparin. It also causes skeletal muscle necrosis after intramuscular injection into mice. The sequence is that of Cytotoxin 1 from Naja atra (Chinese cobra).